The primary structure comprises 427 residues: Glucan 1,3-beta-glucosidase 2 (427 aa).

The signal sequence occupies residues 1-17 (MLISTFIISSLLSIALA). E217 serves as the catalytic Proton donor. 2 disulfide bridges follow: C299–C426 and C324–C355. E316 functions as the Nucleophile in the catalytic mechanism.

The protein belongs to the glycosyl hydrolase 5 (cellulase A) family.

The protein localises to the secreted. The enzyme catalyses Successive hydrolysis of beta-D-glucose units from the non-reducing ends of (1-&gt;3)-beta-D-glucans, releasing alpha-glucose.. In terms of biological role, beta-glucanases participate in the metabolism of beta-glucan, the main structural component of the cell wall. It could also function biosynthetically as a transglycosylase. The polypeptide is Glucan 1,3-beta-glucosidase 2 (EXG2) (Wickerhamomyces anomalus (Yeast)).